We begin with the raw amino-acid sequence, 156 residues long: 6,7-dimethyl-8-ribityllumazine synthase (156 aa).

Residues Phe-23, Ala-57 to Glu-59, and Ala-81 to Ile-83 contribute to the 5-amino-6-(D-ribitylamino)uracil site. Gly-86–Thr-87 is a (2S)-2-hydroxy-3-oxobutyl phosphate binding site. His-89 (proton donor) is an active-site residue. Residue Phe-114 participates in 5-amino-6-(D-ribitylamino)uracil binding. Arg-128 provides a ligand contact to (2S)-2-hydroxy-3-oxobutyl phosphate.

This sequence belongs to the DMRL synthase family.

It catalyses the reaction (2S)-2-hydroxy-3-oxobutyl phosphate + 5-amino-6-(D-ribitylamino)uracil = 6,7-dimethyl-8-(1-D-ribityl)lumazine + phosphate + 2 H2O + H(+). The protein operates within cofactor biosynthesis; riboflavin biosynthesis; riboflavin from 2-hydroxy-3-oxobutyl phosphate and 5-amino-6-(D-ribitylamino)uracil: step 1/2. Catalyzes the formation of 6,7-dimethyl-8-ribityllumazine by condensation of 5-amino-6-(D-ribitylamino)uracil with 3,4-dihydroxy-2-butanone 4-phosphate. This is the penultimate step in the biosynthesis of riboflavin. This chain is 6,7-dimethyl-8-ribityllumazine synthase, found in Helicobacter pylori (strain J99 / ATCC 700824) (Campylobacter pylori J99).